A 245-amino-acid polypeptide reads, in one-letter code: Phycoerythrobilin:ferredoxin oxidoreductase (245 aa).

The protein belongs to the HY2 family.

It carries out the reaction (3Z)-phycoerythrobilin + oxidized 2[4Fe-4S]-[ferredoxin] = 15,16-dihydrobiliverdin + reduced 2[4Fe-4S]-[ferredoxin] + 2 H(+). Catalyzes the two-electron reduction of the C2 and C3(1) diene system of 15,16-dihydrobiliverdin. The polypeptide is Phycoerythrobilin:ferredoxin oxidoreductase (pebB) (Gloeobacter violaceus (strain ATCC 29082 / PCC 7421)).